The primary structure comprises 346 residues: Holliday junction branch migration complex subunit RuvB (346 aa).

The interval 4 to 185 (SDRIITASPF…FGIVSRLEFY (182 aa)) is large ATPase domain (RuvB-L). ATP-binding positions include Leu24, Arg25, Gly66, Lys69, Thr70, Thr71, 132-134 (EDY), Arg175, Tyr185, and Arg222. Thr70 provides a ligand contact to Mg(2+). Residues 186-256 (TADELGKIVT…VADAALQMLD (71 aa)) are small ATPAse domain (RuvB-S). Positions 259-346 (ATGLDVLDRK…TTVPSLFDPD (88 aa)) are head domain (RuvB-H). DNA-binding residues include Arg295, Arg314, and Arg319.

It belongs to the RuvB family. As to quaternary structure, homohexamer. Forms an RuvA(8)-RuvB(12)-Holliday junction (HJ) complex. HJ DNA is sandwiched between 2 RuvA tetramers; dsDNA enters through RuvA and exits via RuvB. An RuvB hexamer assembles on each DNA strand where it exits the tetramer. Each RuvB hexamer is contacted by two RuvA subunits (via domain III) on 2 adjacent RuvB subunits; this complex drives branch migration. In the full resolvosome a probable DNA-RuvA(4)-RuvB(12)-RuvC(2) complex forms which resolves the HJ.

It is found in the cytoplasm. It catalyses the reaction ATP + H2O = ADP + phosphate + H(+). Functionally, the RuvA-RuvB-RuvC complex processes Holliday junction (HJ) DNA during genetic recombination and DNA repair, while the RuvA-RuvB complex plays an important role in the rescue of blocked DNA replication forks via replication fork reversal (RFR). RuvA specifically binds to HJ cruciform DNA, conferring on it an open structure. The RuvB hexamer acts as an ATP-dependent pump, pulling dsDNA into and through the RuvAB complex. RuvB forms 2 homohexamers on either side of HJ DNA bound by 1 or 2 RuvA tetramers; 4 subunits per hexamer contact DNA at a time. Coordinated motions by a converter formed by DNA-disengaged RuvB subunits stimulates ATP hydrolysis and nucleotide exchange. Immobilization of the converter enables RuvB to convert the ATP-contained energy into a lever motion, pulling 2 nucleotides of DNA out of the RuvA tetramer per ATP hydrolyzed, thus driving DNA branch migration. The RuvB motors rotate together with the DNA substrate, which together with the progressing nucleotide cycle form the mechanistic basis for DNA recombination by continuous HJ branch migration. Branch migration allows RuvC to scan DNA until it finds its consensus sequence, where it cleaves and resolves cruciform DNA. This chain is Holliday junction branch migration complex subunit RuvB, found in Nitrosomonas europaea (strain ATCC 19718 / CIP 103999 / KCTC 2705 / NBRC 14298).